Consider the following 602-residue polypeptide: MSSDPMRNIRNFSIIAHVDHGKSTLADRIIQLCGGLEAREMEAQVLDSNPIERERGITIKAQSVSLLYKAQDGQNYHLNLIDTPGHVDFSYEVSRSLAACEGALLVVDASQGVEAQSVANCYTAVEQGLEVVPILNKIDLPTADTERAKAEIEAVIGIDASEAVAVSAKTGLYVEQVLEAIVQRIPAPQPRDTEKLQALIIDSWFDNYLGVVSLVRVMQGEITPGNKLLVMSTGRSHQVDAVGVFTPKRKTLAKLTAGEVGWVTASIKDVHGAPVGDTLTLTSDPAPKPLPGFQEVQPRVFAGLFPVDAEDYPDLREALEKLRLNDAALRFEPENSEAMGFGFRCGFLGMLHMEIVQERLEREYDLNLITTAPTVIYEVLKTDGTLVAMDNPAKMPPINQINEIREPIIRSNILTPPDYVGAVITLCEEKRGSQIGITYLGNQVQVAYELPMAEVVLDFFDKLKSVTRGYASLDYHFLRFQEGPFVRVDTLINGDRVDALSVIVHRHQAERRGRELCEKMKDLIPRQMFDVAIQAAIGSQIISRSTVKAMRKNVLAKCYGGDISRKKKLLEKQKEGKKRMKQIGRVEIPQEAFLAVLQIDNK.

A tr-type G domain is found at 7-189 (RNIRNFSIIA…AIVQRIPAPQ (183 aa)). GTP-binding positions include 19–24 (DHGKST) and 136–139 (NKID).

The protein belongs to the TRAFAC class translation factor GTPase superfamily. Classic translation factor GTPase family. LepA subfamily.

The protein localises to the cell inner membrane. The catalysed reaction is GTP + H2O = GDP + phosphate + H(+). Required for accurate and efficient protein synthesis under certain stress conditions. May act as a fidelity factor of the translation reaction, by catalyzing a one-codon backward translocation of tRNAs on improperly translocated ribosomes. Back-translocation proceeds from a post-translocation (POST) complex to a pre-translocation (PRE) complex, thus giving elongation factor G a second chance to translocate the tRNAs correctly. Binds to ribosomes in a GTP-dependent manner. This is Elongation factor 4 from Xylella fastidiosa (strain M12).